A 100-amino-acid polypeptide reads, in one-letter code: Putative pterin-4-alpha-carbinolamine dehydratase 2 (100 aa).

Belongs to the pterin-4-alpha-carbinolamine dehydratase family.

It catalyses the reaction (4aS,6R)-4a-hydroxy-L-erythro-5,6,7,8-tetrahydrobiopterin = (6R)-L-erythro-6,7-dihydrobiopterin + H2O. The protein is Putative pterin-4-alpha-carbinolamine dehydratase 2 of Cupriavidus pinatubonensis (strain JMP 134 / LMG 1197) (Cupriavidus necator (strain JMP 134)).